Consider the following 147-residue polypeptide: Hemoglobin subunit beta (147 aa).

Residue valine 2 is modified to N-acetylvaline. The region spanning 3 to 147 (HLTGEEKSAV…VANALAHKYH (145 aa)) is the Globin domain. A Phosphothreonine modification is found at threonine 13. The residue at position 45 (serine 45) is a Phosphoserine. Residue lysine 60 is modified to N6-acetyllysine. Heme b is bound at residue histidine 64. Lysine 83 carries the N6-acetyllysine modification. Histidine 93 serves as a coordination point for heme b. Cysteine 94 bears the S-nitrosocysteine mark. Lysine 145 carries the post-translational modification N6-acetyllysine.

This sequence belongs to the globin family. In terms of assembly, heterotetramer of two alpha chains and two beta chains. Red blood cells.

Its function is as follows. Involved in oxygen transport from the lung to the various peripheral tissues. This Ateles paniscus (Black spider monkey) protein is Hemoglobin subunit beta (HBB).